The chain runs to 182 residues: UPF0200 protein Mboo_1593 (182 aa).

An ATP-binding site is contributed by glycine 8 to glycine 15.

This sequence belongs to the UPF0200 family.

The polypeptide is UPF0200 protein Mboo_1593 (Methanoregula boonei (strain DSM 21154 / JCM 14090 / 6A8)).